We begin with the raw amino-acid sequence, 88 residues long: Long neurotoxin LNTX-2 (88 aa).

The N-terminal stretch at 1 to 21 (MKTLLLTLVVVTIVCLDFGYA) is a signal peptide. 4 cysteine pairs are disulfide-bonded: C24-C42, C35-C63, C67-C78, and C79-C84.

The protein belongs to the three-finger toxin family. Long-chain subfamily. Type II alpha-neurotoxin sub-subfamily. As to expression, expressed by the venom gland.

The protein resides in the secreted. Its function is as follows. Binds with high affinity to muscular nicotinic acetylcholine receptors (nAChRs), whereas it binds with a low affinity to neuronal alpha-7/CHRNA7 nAChRs. The chain is Long neurotoxin LNTX-2 from Demansia vestigiata (Lesser black whip snake).